The chain runs to 446 residues: RUN domain-containing protein 3A (446 aa).

Residues 1 to 298 (METSFVQTTM…LQLQLEEAAA (298 aa)) are interaction with RAP2A. Residues 52–189 (DDSSEEFVNF…IDFSFCLKGE (138 aa)) enclose the RUN domain. Threonine 215 is modified (phosphothreonine). Residues 216–239 (DEEERHSAESSTSEDNSPEHPYLP) form a disordered region. Phosphoserine is present on serine 232. Positions 267–322 (YLEELVRLRESQLKDLEAENRRLQLQLEEAAAQNQREKRELEGVILELQEQLTGLI) form a coiled coil. The segment covering 372-384 (PLSAEASLSSDSQ) has biased composition (polar residues). The segment at 372–404 (PLSAEASLSSDSQRLGEGTRDEEPWGPIGKDPT) is disordered. Serine 416 and serine 419 each carry phosphoserine.

The protein belongs to the RUNDC3 family. As to quaternary structure, interacts with the GTP-bound form of RAP2A.

May act as an effector of RAP2A in neuronal cells. This Pongo abelii (Sumatran orangutan) protein is RUN domain-containing protein 3A (RUNDC3A).